The chain runs to 637 residues: DNA primase (637 aa).

A CHC2-type zinc finger spans residues C39–C63. Residues H257–D338 form the Toprim domain. Residues E263, D307, and D309 each contribute to the Mg(2+) site.

The protein belongs to the DnaG primase family. Monomer. Interacts with DnaB. Requires Zn(2+) as cofactor. The cofactor is Mg(2+).

It catalyses the reaction ssDNA + n NTP = ssDNA/pppN(pN)n-1 hybrid + (n-1) diphosphate.. Its function is as follows. RNA polymerase that catalyzes the synthesis of short RNA molecules used as primers for DNA polymerase during DNA replication. The protein is DNA primase of Lactococcus lactis subsp. lactis (strain IL1403) (Streptococcus lactis).